A 268-amino-acid polypeptide reads, in one-letter code: Hydroxyethylthiazole kinase (268 aa).

Residue Met-45 participates in substrate binding. Arg-121 and Thr-167 together coordinate ATP. Residue Gly-194 coordinates substrate.

Belongs to the Thz kinase family. It depends on Mg(2+) as a cofactor.

It catalyses the reaction 5-(2-hydroxyethyl)-4-methylthiazole + ATP = 4-methyl-5-(2-phosphooxyethyl)-thiazole + ADP + H(+). It functions in the pathway cofactor biosynthesis; thiamine diphosphate biosynthesis; 4-methyl-5-(2-phosphoethyl)-thiazole from 5-(2-hydroxyethyl)-4-methylthiazole: step 1/1. In terms of biological role, catalyzes the phosphorylation of the hydroxyl group of 4-methyl-5-beta-hydroxyethylthiazole (THZ). In Bacillus anthracis (strain A0248), this protein is Hydroxyethylthiazole kinase.